Here is an 853-residue protein sequence, read N- to C-terminus: Transcription factor macR (853 aa).

The zn(2)-C6 fungal-type DNA-binding region spans 18–45 (CIVCRRRKVRCGREQPECANCVRMKENC). Disordered stretches follow at residues 54–122 (ESTG…PYPT), 138–166 (ANAP…PTPS), 734–775 (ASDL…AGNK), and 833–853 (LGSQ…DFPG). 3 stretches are compositionally biased toward polar residues: residues 104-116 (PQVS…SPQR), 141-163 (PQIN…SLFP), and 738-752 (RATS…SSTT).

It localises to the nucleus. Functionally, transcription factor that regulates the expression of the gene cluster that mediates the biosynthesis of macrophorins, isoprenoid epoxycyclohexenones containing cyclized drimane moieties. This chain is Transcription factor macR, found in Penicillium terrestre.